The following is an 87-amino-acid chain: DNA-directed RNA polymerase subunit omega (87 aa).

The protein belongs to the RNA polymerase subunit omega family. The RNAP catalytic core consists of 2 alpha, 1 beta, 1 beta' and 1 omega subunit. When a sigma factor is associated with the core the holoenzyme is formed, which can initiate transcription.

The enzyme catalyses RNA(n) + a ribonucleoside 5'-triphosphate = RNA(n+1) + diphosphate. In terms of biological role, promotes RNA polymerase assembly. Latches the N- and C-terminal regions of the beta' subunit thereby facilitating its interaction with the beta and alpha subunits. The protein is DNA-directed RNA polymerase subunit omega of Pseudomonas savastanoi pv. phaseolicola (strain 1448A / Race 6) (Pseudomonas syringae pv. phaseolicola (strain 1448A / Race 6)).